A 463-amino-acid polypeptide reads, in one-letter code: Alpha-L-arabinofuranosidase B (463 aa).

A signal peptide spans Met-1–Ala-26. Residues Gly-27–Lys-308 are catalytic. Cys-29 and Cys-39 are joined by a disulfide. The N-linked (GlcNAc...) asparagine glycan is linked to Asn-81. Cystine bridges form between Cys-89/Cys-94 and Cys-184/Cys-185. Asp-227 serves as a coordination point for substrate. Residue Glu-229 is the Nucleophile of the active site. Residue Asn-230 coordinates substrate. The N-linked (GlcNAc...) asparagine glycan is linked to Asn-280. Gly-304 lines the substrate pocket. Positions Leu-309–Ala-463 are ABD. N-linked (GlcNAc...) asparagine glycosylation is present at Asn-332. Cys-366 and Cys-404 form a disulfide bridge. Residues His-381, Asn-383, Phe-384, His-428, Asp-430, Leu-433, and Asp-453 each coordinate substrate.

The protein belongs to the glycosyl hydrolase 54 family. In terms of processing, residue Asn-280 is mannosylated with up to 7 mannose residues.

The protein localises to the secreted. The catalysed reaction is Hydrolysis of terminal non-reducing alpha-L-arabinofuranoside residues in alpha-L-arabinosides.. It participates in glycan metabolism; L-arabinan degradation. Its function is as follows. Secreted alpha-L-arabinofuranosidase that actively hydrolyzes p-NP-alpha-L-arabinofuranoside and is specific for furanose configuration of the carbohydrate ring. Also exhibits significant activity against polymeric arabinose-containing substrates such as arabinan and arabinoxylan, a major component of plant hemicellulose. The polypeptide is Alpha-L-arabinofuranosidase B (abfB) (Penicillium canescens).